The sequence spans 376 residues: Carbapenem antibiotics biosynthesis protein CarD (376 aa).

It belongs to the proline oxidase family.

It functions in the pathway antibiotic biosynthesis; carbapenem biosynthesis. The chain is Carbapenem antibiotics biosynthesis protein CarD (carD) from Pectobacterium carotovorum subsp. carotovorum (Erwinia carotovora subsp. carotovora).